The chain runs to 227 residues: Ribonuclease 3 (227 aa).

Positions 4 to 126 (LDRLERKIGY…IIGAMSLDQG (123 aa)) constitute an RNase III domain. A Mg(2+)-binding site is contributed by glutamate 39. Aspartate 43 is an active-site residue. Aspartate 112 and glutamate 115 together coordinate Mg(2+). Glutamate 115 is an active-site residue. Residues 153 to 226 (DAKTRLQEYL…AEQILKELDI (74 aa)) enclose the DRBM domain.

Belongs to the ribonuclease III family. In terms of assembly, homodimer. It depends on Mg(2+) as a cofactor.

Its subcellular location is the cytoplasm. It carries out the reaction Endonucleolytic cleavage to 5'-phosphomonoester.. In terms of biological role, digests double-stranded RNA. Involved in the processing of primary rRNA transcript to yield the immediate precursors to the large and small rRNAs (23S and 16S). Processes some mRNAs, and tRNAs when they are encoded in the rRNA operon. Processes pre-crRNA and tracrRNA of type II CRISPR loci if present in the organism. The sequence is that of Ribonuclease 3 from Haemophilus influenzae (strain 86-028NP).